Here is a 179-residue protein sequence, read N- to C-terminus: M-phase-specific PLK1-interacting protein (179 aa).

The segment at 1-135 (MQRQNFRPPT…RVREKRMSNE (135 aa)) is disordered. Arg-37 bears the Asymmetric dimethylarginine mark. Residues Ser-40 and Ser-47 each carry the phosphoserine modification. Thr-51 bears the Phosphothreonine mark. An Omega-N-methylarginine modification is found at Arg-57. Residues Arg-59 and Arg-68 each carry the asymmetric dimethylarginine modification. Low complexity predominate over residues 60-71 (PYGSSHSPRHGG). Ser-72 is subject to Phosphoserine. At Arg-77 the chain carries Asymmetric dimethylarginine. Low complexity predominate over residues 79 to 109 (GSPSPGGYPGSYSRSPAGSQQQFGYSPGQQQ). A phosphoserine mark is found at Ser-80, Ser-82, Ser-93, Ser-104, and Ser-115. Over residues 110-122 (THPQGSPRTSTPF) the composition is skewed to polar residues. Residue Arg-117 is modified to Omega-N-methylarginine. The residue at position 120 (Thr-120) is a Phosphothreonine. Residues Ser-124 and Ser-133 each carry the phosphoserine modification.

Interacts with PLK1; phosphorylation-dependent. Post-translationally, phosphorylated during mitosis in the cell cycle probably by CDK1. As to expression, expressed at highest levels in liver and kidney; intermediate expression in skeletal muscle, pancreas, heart and placenta; low expression in brain and lung. Expressed in epidermis and hair follicles.

Its subcellular location is the nucleus. It is found in the cytoplasm. The protein resides in the cytoskeleton. The protein localises to the microtubule organizing center. It localises to the centrosome. Its function is as follows. May play a role in maintenance of cell cycle integrity by regulating mitosis or cytokinesis. This Homo sapiens (Human) protein is M-phase-specific PLK1-interacting protein (MPLKIP).